Here is a 596-residue protein sequence, read N- to C-terminus: MAKEIVLGIDLGTTNSVVSIVEGKNPTVLENPNGKRTTPSVVAFKNGEIIVGDAAKRQVETNPDTIISIKRLMGTNKTVKANNKEYKPEEISAMILSYMKDYAEKKLGQKVSKAVITVPAYFDNAEREATKNAGRIAGLEVLRIINEPTAAALAFGLDKNKAMKVLVYDLGGGTFDVSVLDLEDGTFEVLSTSGDNHLGGDDWDNEIVKWLTKEIKTKYSYDVSKDKYALARLKENAEKAKIDLSNQSVVQINIPFLAMSANGPINVELSLKRSEFEAMTSHLLDRTRKPIEDALKEAKLSANDIHEVLLVGGSTRMPAVQDMVKRTLGKEPNRSINPDEVVSIGAAIQGGVLAGHIDDILLLDVTPLTLGIETLGGVATPLIPRNTTIPATKSQVFSTAADNQTEVTISVIQGERQMASDNKMLGRFNLTGIEAAPRGVPQIEVTFSIDVNGITKVSAKDMKTQKEQTITIENSSKLSEEEIQKFIKDAEANKEADAKRKEEAETIVRAESLIDQVKKALEAQGDKADAKTKEESDKLIKELQDLIDKKDIPTLKAKLEEVENMMKNFANFAQQANATKDQSSKDQEEVATVVEE.

Thr-174 is subject to Phosphothreonine; by autocatalysis. The segment at 576-596 (ANATKDQSSKDQEEVATVVEE) is disordered.

It belongs to the heat shock protein 70 family.

Acts as a chaperone. This Mycoplasmopsis synoviae (strain 53) (Mycoplasma synoviae) protein is Chaperone protein DnaK.